Consider the following 494-residue polypeptide: Endoglucanase 1 (494 aa).

An N-terminal signal peptide occupies residues M1–A25. The Nucleophile role is filled by D82. 2 N-linked (GlcNAc...) asparagine glycosylation sites follow: N254 and N359. Active-site residues include H411, D462, and E471.

Belongs to the glycosyl hydrolase 9 (cellulase E) family.

It carries out the reaction Endohydrolysis of (1-&gt;4)-beta-D-glucosidic linkages in cellulose, lichenin and cereal beta-D-glucans.. In terms of biological role, involved in ripening fruit process. The sequence is that of Endoglucanase 1 (CEL1) from Persea americana (Avocado).